A 693-amino-acid chain; its full sequence is Elongation factor G 1 (693 aa).

Residues 4–281 form the tr-type G domain; the sequence is NKLRNIGISA…AVTRFLPSPH (278 aa). GTP-binding positions include 13–20, 80–84, and 134–137; these read AHIDSGKT, DTPGH, and NKCD.

It belongs to the TRAFAC class translation factor GTPase superfamily. Classic translation factor GTPase family. EF-G/EF-2 subfamily.

It localises to the cytoplasm. Catalyzes the GTP-dependent ribosomal translocation step during translation elongation. During this step, the ribosome changes from the pre-translocational (PRE) to the post-translocational (POST) state as the newly formed A-site-bound peptidyl-tRNA and P-site-bound deacylated tRNA move to the P and E sites, respectively. Catalyzes the coordinated movement of the two tRNA molecules, the mRNA and conformational changes in the ribosome. The chain is Elongation factor G 1 from Borreliella afzelii (strain PKo) (Borrelia afzelii).